A 235-amino-acid chain; its full sequence is Glucosamine-6-phosphate deaminase (235 aa).

The active-site Proton acceptor; for enolization step is the aspartate 62. Asparagine 128 (for ring-opening step) is an active-site residue. The Proton acceptor; for ring-opening step role is filled by histidine 130. The For ring-opening step role is filled by glutamate 135.

This sequence belongs to the glucosamine/galactosamine-6-phosphate isomerase family. NagB subfamily.

The catalysed reaction is alpha-D-glucosamine 6-phosphate + H2O = beta-D-fructose 6-phosphate + NH4(+). The protein operates within amino-sugar metabolism; N-acetylneuraminate degradation; D-fructose 6-phosphate from N-acetylneuraminate: step 5/5. Functionally, catalyzes the reversible isomerization-deamination of glucosamine 6-phosphate (GlcN6P) to form fructose 6-phosphate (Fru6P) and ammonium ion. This Streptococcus pneumoniae serotype 2 (strain D39 / NCTC 7466) protein is Glucosamine-6-phosphate deaminase.